A 517-amino-acid chain; its full sequence is Zinc finger protein 215 (517 aa).

An SCAN box domain is found at 48–126 (RQKFRHFQYL…KDMVTLIEDV (79 aa)). The KRAB domain maps to 164-237 (VTFKDVVVEF…EKEIPRKTIF (74 aa)). 4 C2H2-type zinc fingers span residues 379–401 (YECYQCGKAFCRSSSLIRHQIIH), 407–429 (YKCSECGRFFNRRTNLTKHQKLH), 462–484 (YQCVNCGKSFNRSSSLIRHQMIH), and 490–512 (FKCKECSKAFNRSSNLVKHQKLH).

The protein belongs to the krueppel C2H2-type zinc-finger protein family.

Its subcellular location is the nucleus. In terms of biological role, may be involved in transcriptional regulation. This is Zinc finger protein 215 (ZNF215) from Homo sapiens (Human).